The following is a 249-amino-acid chain: ATP synthase subunit a (249 aa).

6 helical membrane-spanning segments follow: residues 30–50, 84–104, 114–134, 143–163, 196–216, and 221–241; these read SAYM…GVAG, FFPL…VGII, LIVT…YGFY, IFVP…IEVF, LLAG…GMVI, and LELL…CIYL.

The protein belongs to the ATPase A chain family. In terms of assembly, F-type ATPases have 2 components, CF(1) - the catalytic core - and CF(0) - the membrane proton channel. CF(1) has five subunits: alpha(3), beta(3), gamma(1), delta(1), epsilon(1). CF(0) has four main subunits: a, b, b' and c.

The protein resides in the cell inner membrane. Key component of the proton channel; it plays a direct role in the translocation of protons across the membrane. In Rhodopseudomonas palustris (strain BisB18), this protein is ATP synthase subunit a.